The chain runs to 205 residues: ATP-dependent Clp protease proteolytic subunit (205 aa).

The Nucleophile role is filled by serine 109. Histidine 134 is an active-site residue.

The protein belongs to the peptidase S14 family. Fourteen ClpP subunits assemble into 2 heptameric rings which stack back to back to give a disk-like structure with a central cavity, resembling the structure of eukaryotic proteasomes.

The protein resides in the cytoplasm. It carries out the reaction Hydrolysis of proteins to small peptides in the presence of ATP and magnesium. alpha-casein is the usual test substrate. In the absence of ATP, only oligopeptides shorter than five residues are hydrolyzed (such as succinyl-Leu-Tyr-|-NHMec, and Leu-Tyr-Leu-|-Tyr-Trp, in which cleavage of the -Tyr-|-Leu- and -Tyr-|-Trp bonds also occurs).. In terms of biological role, cleaves peptides in various proteins in a process that requires ATP hydrolysis. Has a chymotrypsin-like activity. Plays a major role in the degradation of misfolded proteins. The protein is ATP-dependent Clp protease proteolytic subunit of Baumannia cicadellinicola subsp. Homalodisca coagulata.